Consider the following 119-residue polypeptide: Non-specific lipid-transfer protein 12 (119 aa).

Residues 1-24 (MAFTPKIITCLIVLTIYMASPTES) form the signal peptide. Cystine bridges form between Cys28–Cys75, Cys38–Cys52, Cys53–Cys98, and Cys73–Cys112.

Belongs to the plant LTP family.

Plant non-specific lipid-transfer proteins transfer phospholipids as well as galactolipids across membranes. May play a role in wax or cutin deposition in the cell walls of expanding epidermal cells and certain secretory tissues. The chain is Non-specific lipid-transfer protein 12 (LTP12) from Arabidopsis thaliana (Mouse-ear cress).